A 182-amino-acid chain; its full sequence is Translation initiation factor IF-3 (182 aa).

The tract at residues 1 to 22 (MPLGDCNISTPDNKQNRKNQEI) is disordered.

It belongs to the IF-3 family. Monomer.

The protein resides in the cytoplasm. Functionally, IF-3 binds to the 30S ribosomal subunit and shifts the equilibrium between 70S ribosomes and their 50S and 30S subunits in favor of the free subunits, thus enhancing the availability of 30S subunits on which protein synthesis initiation begins. This Xanthomonas campestris pv. campestris (strain ATCC 33913 / DSM 3586 / NCPPB 528 / LMG 568 / P 25) protein is Translation initiation factor IF-3.